The chain runs to 142 residues: Mitochondrial import inner membrane translocase subunit TIM22-4 (142 aa).

4 consecutive transmembrane segments (helical) span residues 21 to 41 (VTSGVMGGGLGLMMGLFLGAL), 70 to 88 (SCKTFAVMGLVFSAAECIV), 97 to 113 (TVNTAIAGCVTGGSMSA), and 120 to 137 (ACIGCAGFAIFSVLIEKF).

This sequence belongs to the Tim17/Tim22/Tim23 family.

Its subcellular location is the mitochondrion inner membrane. Its function is as follows. Essential core component of the TIM22 complex, a complex that mediates the import and insertion of multi-pass transmembrane proteins into the mitochondrial inner membrane. The protein is Mitochondrial import inner membrane translocase subunit TIM22-4 (TIM22-4) of Arabidopsis thaliana (Mouse-ear cress).